The primary structure comprises 366 residues: Erythronate-4-phosphate dehydrogenase (366 aa).

Substrate contacts are provided by S46 and T67. Positions 147 and 175 each coordinate NAD(+). R208 is an active-site residue. An NAD(+)-binding site is contributed by D228. E233 is an active-site residue. The Proton donor role is filled by H250. G253 contacts NAD(+). Y254 contacts substrate.

This sequence belongs to the D-isomer specific 2-hydroxyacid dehydrogenase family. PdxB subfamily. Homodimer.

The protein localises to the cytoplasm. The catalysed reaction is 4-phospho-D-erythronate + NAD(+) = (R)-3-hydroxy-2-oxo-4-phosphooxybutanoate + NADH + H(+). It participates in cofactor biosynthesis; pyridoxine 5'-phosphate biosynthesis; pyridoxine 5'-phosphate from D-erythrose 4-phosphate: step 2/5. Catalyzes the oxidation of erythronate-4-phosphate to 3-hydroxy-2-oxo-4-phosphonooxybutanoate. This chain is Erythronate-4-phosphate dehydrogenase, found in Coxiella burnetii (strain Dugway 5J108-111).